The primary structure comprises 252 residues: Type II secretion system protein N (252 aa).

Topologically, residues 1 to 4 (MKNR) are cytoplasmic. A helical membrane pass occupies residues 5-25 (LTIGLLLAAIYLFWLLLSAPA). Residues 26 to 252 (RLLALTLSDD…QGEWLSEEKK (227 aa)) are Periplasmic-facing.

The protein belongs to the GSP N family.

The protein localises to the cell inner membrane. In terms of biological role, involved in a type II secretion system (T2SS, formerly general secretion pathway, GSP) for the export of proteins. Required for the translocation of pullulanase. The protein is Type II secretion system protein N (pulN) of Klebsiella pneumoniae.